Consider the following 703-residue polypeptide: Phosphoribosylformylglycinamidine synthase subunit PurL (703 aa).

Residue His-36 is part of the active site. ATP is bound by residues Tyr-39 and Lys-80. Glu-82 is a Mg(2+) binding site. Residues 83 to 86 and Arg-105 contribute to the substrate site; that span reads SHNH. His-84 functions as the Proton acceptor in the catalytic mechanism. Asp-106 is a Mg(2+) binding site. Gln-226 is a substrate binding site. Asp-252 contacts Mg(2+). 294-296 serves as a coordination point for substrate; that stretch reads ETQ. ATP contacts are provided by Asp-468 and Gly-505. Residue Ser-508 participates in substrate binding.

Belongs to the FGAMS family. As to quaternary structure, monomer. Part of the FGAM synthase complex composed of 1 PurL, 1 PurQ and 2 PurS subunits.

It localises to the cytoplasm. The catalysed reaction is N(2)-formyl-N(1)-(5-phospho-beta-D-ribosyl)glycinamide + L-glutamine + ATP + H2O = 2-formamido-N(1)-(5-O-phospho-beta-D-ribosyl)acetamidine + L-glutamate + ADP + phosphate + H(+). It functions in the pathway purine metabolism; IMP biosynthesis via de novo pathway; 5-amino-1-(5-phospho-D-ribosyl)imidazole from N(2)-formyl-N(1)-(5-phospho-D-ribosyl)glycinamide: step 1/2. Part of the phosphoribosylformylglycinamidine synthase complex involved in the purines biosynthetic pathway. Catalyzes the ATP-dependent conversion of formylglycinamide ribonucleotide (FGAR) and glutamine to yield formylglycinamidine ribonucleotide (FGAM) and glutamate. The FGAM synthase complex is composed of three subunits. PurQ produces an ammonia molecule by converting glutamine to glutamate. PurL transfers the ammonia molecule to FGAR to form FGAM in an ATP-dependent manner. PurS interacts with PurQ and PurL and is thought to assist in the transfer of the ammonia molecule from PurQ to PurL. This Sulfurisphaera tokodaii (strain DSM 16993 / JCM 10545 / NBRC 100140 / 7) (Sulfolobus tokodaii) protein is Phosphoribosylformylglycinamidine synthase subunit PurL.